A 63-amino-acid chain; its full sequence is Large ribosomal subunit protein bL35 (63 aa).

A disordered region spans residues 1-22 (MPKMKTKSGATKRFKKTATGFK).

Belongs to the bacterial ribosomal protein bL35 family.

The polypeptide is Large ribosomal subunit protein bL35 (Marinobacter nauticus (strain ATCC 700491 / DSM 11845 / VT8) (Marinobacter aquaeolei)).